The sequence spans 324 residues: D-alanine--D-alanine ligase (324 aa).

The ATP-grasp domain occupies 121–321 (NQYLKGFGIR…IKDVMTDIIE (201 aa)). 149–204 (INKIGLPCFIKPNAGGSSFGVTKVKTKEDIQPAIEKAFEESDEVMIEAFMKGTEIT) contacts ATP. The Mg(2+) site is built by aspartate 275, glutamate 288, and asparagine 290.

It belongs to the D-alanine--D-alanine ligase family. It depends on Mg(2+) as a cofactor. Requires Mn(2+) as cofactor.

The protein localises to the cytoplasm. It catalyses the reaction 2 D-alanine + ATP = D-alanyl-D-alanine + ADP + phosphate + H(+). It functions in the pathway cell wall biogenesis; peptidoglycan biosynthesis. Functionally, cell wall formation. This Phocaeicola vulgatus (strain ATCC 8482 / DSM 1447 / JCM 5826 / CCUG 4940 / NBRC 14291 / NCTC 11154) (Bacteroides vulgatus) protein is D-alanine--D-alanine ligase.